The sequence spans 203 residues: Holliday junction branch migration complex subunit RuvA (203 aa).

A domain I region spans residues 1–63 (MIGKLSGKID…EEHIHLYGFL (63 aa)). Positions 64-142 (TIEEKNFFNL…KISTGAAIIN (79 aa)) are domain II. Residues 143–149 (DSLNIKN) are flexible linker. Positions 150-203 (ITSVASNEVIKALVNLGFSRFEAQNSVQGIVIQNPEISIDELIKTALKNRNAGL) are domain III.

Belongs to the RuvA family. Homotetramer. Forms an RuvA(8)-RuvB(12)-Holliday junction (HJ) complex. HJ DNA is sandwiched between 2 RuvA tetramers; dsDNA enters through RuvA and exits via RuvB. An RuvB hexamer assembles on each DNA strand where it exits the tetramer. Each RuvB hexamer is contacted by two RuvA subunits (via domain III) on 2 adjacent RuvB subunits; this complex drives branch migration. In the full resolvosome a probable DNA-RuvA(4)-RuvB(12)-RuvC(2) complex forms which resolves the HJ.

Its subcellular location is the cytoplasm. Its function is as follows. The RuvA-RuvB-RuvC complex processes Holliday junction (HJ) DNA during genetic recombination and DNA repair, while the RuvA-RuvB complex plays an important role in the rescue of blocked DNA replication forks via replication fork reversal (RFR). RuvA specifically binds to HJ cruciform DNA, conferring on it an open structure. The RuvB hexamer acts as an ATP-dependent pump, pulling dsDNA into and through the RuvAB complex. HJ branch migration allows RuvC to scan DNA until it finds its consensus sequence, where it cleaves and resolves the cruciform DNA. The chain is Holliday junction branch migration complex subunit RuvA from Rickettsia akari (strain Hartford).